We begin with the raw amino-acid sequence, 31 residues long: Cytochrome b6-f complex subunit 6 (31 aa).

Residues 5-25 form a helical membrane-spanning segment; that stretch reads ISYLGILVGALLFVTITFLTL.

This sequence belongs to the PetL family. In terms of assembly, the 4 large subunits of the cytochrome b6-f complex are cytochrome b6, subunit IV (17 kDa polypeptide, PetD), cytochrome f and the Rieske protein, while the 4 small subunits are PetG, PetL, PetM and PetN. The complex functions as a dimer.

The protein localises to the plastid. It is found in the chloroplast thylakoid membrane. Component of the cytochrome b6-f complex, which mediates electron transfer between photosystem II (PSII) and photosystem I (PSI), cyclic electron flow around PSI, and state transitions. PetL is important for photoautotrophic growth as well as for electron transfer efficiency and stability of the cytochrome b6-f complex. In Chlorokybus atmophyticus (Soil alga), this protein is Cytochrome b6-f complex subunit 6.